The chain runs to 510 residues: ATP synthase subunit alpha (510 aa).

171-178 (GDRQTGKT) provides a ligand contact to ATP.

This sequence belongs to the ATPase alpha/beta chains family. In terms of assembly, F-type ATPases have 2 components, CF(1) - the catalytic core - and CF(0) - the membrane proton channel. CF(1) has five subunits: alpha(3), beta(3), gamma(1), delta(1), epsilon(1). CF(0) has three main subunits: a(1), b(2) and c(9-12). The alpha and beta chains form an alternating ring which encloses part of the gamma chain. CF(1) is attached to CF(0) by a central stalk formed by the gamma and epsilon chains, while a peripheral stalk is formed by the delta and b chains.

Its subcellular location is the cell inner membrane. The catalysed reaction is ATP + H2O + 4 H(+)(in) = ADP + phosphate + 5 H(+)(out). Functionally, produces ATP from ADP in the presence of a proton gradient across the membrane. The alpha chain is a regulatory subunit. This is ATP synthase subunit alpha from Phenylobacterium zucineum (strain HLK1).